A 223-amino-acid polypeptide reads, in one-letter code: Ribose-5-phosphate isomerase A (223 aa).

Substrate contacts are provided by residues 32–35 (TGST), 85–88 (DGAD), and 98–101 (KGGG). Glu107 acts as the Proton acceptor in catalysis. Residue Lys125 coordinates substrate.

Belongs to the ribose 5-phosphate isomerase family. In terms of assembly, homodimer.

It catalyses the reaction aldehydo-D-ribose 5-phosphate = D-ribulose 5-phosphate. It functions in the pathway carbohydrate degradation; pentose phosphate pathway; D-ribose 5-phosphate from D-ribulose 5-phosphate (non-oxidative stage): step 1/1. Its function is as follows. Catalyzes the reversible conversion of ribose-5-phosphate to ribulose 5-phosphate. This Pseudomonas savastanoi pv. phaseolicola (strain 1448A / Race 6) (Pseudomonas syringae pv. phaseolicola (strain 1448A / Race 6)) protein is Ribose-5-phosphate isomerase A.